The chain runs to 2894 residues: Bifunctional DNA-directed RNA polymerase subunit beta-beta' (2894 aa).

Residues 1–1378 (MANFTKLKNR…DVNIYGDEQD (1378 aa)) form a DNA-directed RNA polymerase subunit beta region. Residues 1385-2894 (PIAIKEDERP…QEEYEEDEEE (1510 aa)) are DNA-directed RNA polymerase subunit beta'. Zn(2+) is bound by residues C1450, C1452, C1465, and C1468. Mg(2+) is bound by residues D1849, D1851, and D1853. C2179, C2253, C2260, and C2263 together coordinate Zn(2+).

In the N-terminal section; belongs to the RNA polymerase beta chain family. The protein in the C-terminal section; belongs to the RNA polymerase beta' chain family. As to quaternary structure, the RNAP catalytic core consists of 2 alpha, 1 beta/beta' and 1 omega subunit. When a sigma factor is associated with the core the holoenzyme is formed, which can initiate transcription. The cofactor is Mg(2+). It depends on Zn(2+) as a cofactor.

It catalyses the reaction RNA(n) + a ribonucleoside 5'-triphosphate = RNA(n+1) + diphosphate. Its function is as follows. DNA-dependent RNA polymerase catalyzes the transcription of DNA into RNA using the four ribonucleoside triphosphates as substrates. This chain is Bifunctional DNA-directed RNA polymerase subunit beta-beta' (rpoBC), found in Helicobacter hepaticus (strain ATCC 51449 / 3B1).